The following is a 223-amino-acid chain: UPF0441 protein KPK_0672 (223 aa).

Residues Ser-165–Gly-223 form a disordered region. 2 stretches are compositionally biased toward low complexity: residues Val-177–Thr-193 and Arg-209–Gly-223.

The protein belongs to the UPF0441 family.

This chain is UPF0441 protein KPK_0672, found in Klebsiella pneumoniae (strain 342).